The primary structure comprises 316 residues: MASHKHPGSPGWTGPICQDMAGTTPKASAPRPDLPRPGPEDHLEAQGSPSSNSSMTTRELQEYWRAQKCCWKHVKLLFEIASARIEERKVSKFVMYQIVVIQTGSFDSNKAVLERRYSDFETLQKKLLKTFREEIEDVVFPKKHLIGNFTEEMISERKLALKEYLSVLYAIRCVRRSREFIDFLTRPELKEAFGCLRAGQYTKALDILMRVVPLQEKLTAHCPVLLVPALCAMLVCHRDLDRPAEAFAVGERALQCLQAREGHRYYAPLLDAMARLAYLLGKDFVSLQKRLEESQLRKPALRGFTLKELTVQEYLS.

The interval 1–57 (MASHKHPGSPGWTGPICQDMAGTTPKASAPRPDLPRPGPEDHLEAQGSPSSNSSMTT) is disordered. A Phosphoserine modification is found at S3. Over residues 47–57 (GSPSSNSSMTT) the composition is skewed to polar residues. A PX domain is found at 74 to 191 (VKLLFEIASA…DFLTRPELKE (118 aa)). A 1,2-diacyl-sn-glycero-3-phospho-(1D-myo-inositol-3-phosphate)-binding residues include R116, S118, K143, and R157.

It belongs to the sorting nexin family. Interacts with SELPLG. Interaction with SELPLG is controversial.

It localises to the early endosome membrane. Its subcellular location is the cell membrane. It is found in the cytoplasm. The protein resides in the nucleus. In terms of biological role, may play a role in cellular vesicle trafficking. Has been proposed to function as a sorting protein that targets SELPLG into endosomes, but has no effect on SELPLG internalization from the cell surface, or on SELPLG-mediated cell-cell adhesion. This is Sorting nexin-20 (SNX20) from Bos taurus (Bovine).